The chain runs to 89 residues: Ixosin-B (89 aa).

The N-terminal stretch at 1 to 26 (MASGWTHRLLLLAAVVTLGATPIAAA) is a signal peptide. The propeptide occupies 27-57 (SMEYLVTAPGYLTPNADIKITAVVTNPSSAG). The interval 68–89 (SGIQPEQHSSGKSDVRRWRSRY) is disordered. Residues 76–89 (SSGKSDVRRWRSRY) show a composition bias toward basic and acidic residues.

In terms of biological role, has antifungal activity against C.albicans. Has antibacterial activity against the Gram-positive bacterium S.aureus and the Gram-negative bacterium E.coli. Lacks hemolytic activity against rabbit erythrocytes. The chain is Ixosin-B from Ixodes sinensis (Hard tick).